A 426-amino-acid chain; its full sequence is Dihydroorotase (426 aa).

The Zn(2+) site is built by His-58 and His-60. Residues 60 to 62 (HLR) and Asn-92 each bind substrate. Zn(2+)-binding residues include Asp-150, His-177, and His-230. Substrate is bound at residue Asn-276. Asp-303 contributes to the Zn(2+) binding site. Asp-303 is an active-site residue. Residues His-307 and 321-322 (FG) each bind substrate.

This sequence belongs to the metallo-dependent hydrolases superfamily. DHOase family. Class I DHOase subfamily. Requires Zn(2+) as cofactor.

It catalyses the reaction (S)-dihydroorotate + H2O = N-carbamoyl-L-aspartate + H(+). It participates in pyrimidine metabolism; UMP biosynthesis via de novo pathway; (S)-dihydroorotate from bicarbonate: step 3/3. In terms of biological role, catalyzes the reversible cyclization of carbamoyl aspartate to dihydroorotate. The polypeptide is Dihydroorotase (Listeria monocytogenes serotype 4a (strain HCC23)).